The chain runs to 633 residues: Chaperone protein HtpG (633 aa).

The a; substrate-binding stretch occupies residues 1–341 (MTAPHETMSF…SADLPLNVSR (341 aa)). The tract at residues 342-562 (ELLQESRDVK…EGDMSGYLQR (221 aa)) is b. The interval 563 to 633 (LLKQAGQKAP…YVQRVNKLLA (71 aa)) is c.

Belongs to the heat shock protein 90 family. Homodimer.

Its subcellular location is the cytoplasm. Functionally, molecular chaperone. Has ATPase activity. This chain is Chaperone protein HtpG, found in Cupriavidus necator (strain ATCC 17699 / DSM 428 / KCTC 22496 / NCIMB 10442 / H16 / Stanier 337) (Ralstonia eutropha).